The primary structure comprises 122 residues: Large ribosomal subunit protein uL14 (122 aa).

It belongs to the universal ribosomal protein uL14 family. As to quaternary structure, part of the 50S ribosomal subunit. Forms a cluster with proteins L3 and L19. In the 70S ribosome, L14 and L19 interact and together make contacts with the 16S rRNA in bridges B5 and B8.

Binds to 23S rRNA. Forms part of two intersubunit bridges in the 70S ribosome. In Shewanella denitrificans (strain OS217 / ATCC BAA-1090 / DSM 15013), this protein is Large ribosomal subunit protein uL14.